The chain runs to 249 residues: Probable septum site-determining protein MinC (249 aa).

Residues 116 to 149 (AAVSPPPPPPPPPARAEPAAPVARPAPGRMQRNA) form a disordered region. Residues 119–130 (SPPPPPPPPPAR) show a composition bias toward pro residues. Residues 131–142 (AEPAAPVARPAP) are compositionally biased toward low complexity.

The protein belongs to the MinC family. As to quaternary structure, interacts with MinD and FtsZ.

Its function is as follows. Cell division inhibitor that blocks the formation of polar Z ring septums. Rapidly oscillates between the poles of the cell to destabilize FtsZ filaments that have formed before they mature into polar Z rings. Prevents FtsZ polymerization. The protein is Probable septum site-determining protein MinC of Xanthomonas campestris pv. campestris (strain B100).